A 335-amino-acid polypeptide reads, in one-letter code: Vitamin B12 import system permease protein BtuC (335 aa).

Helical transmembrane passes span 22-42, 67-87, 94-114, 117-137, 153-173, 200-220, 243-263, 281-301, and 308-328; these read LLLLTLGVAVAFVFSLSAGDV, LAVMLVGASLAVAGAVMQSLF, PGLLGVANGAGVALVLTVLLG, LLPVAFMSLSAIAGALVMTFL, LLVGVALGIVCSAVMTWAVYF, LVLALLPVLLWLCCQGKALNF, VLAIGWLVGVSVALAGVIGFV, YLLPGCALAGAGVLLAADVVA, and AELPIGVVTATLGAPLFIWLL.

Belongs to the binding-protein-dependent transport system permease family. FecCD subfamily. As to quaternary structure, the complex is composed of two ATP-binding proteins (BtuD), two transmembrane proteins (BtuC) and a solute-binding protein (BtuF).

Its subcellular location is the cell inner membrane. In terms of biological role, part of the ABC transporter complex BtuCDF involved in vitamin B12 import. Involved in the translocation of the substrate across the membrane. The sequence is that of Vitamin B12 import system permease protein BtuC from Serratia proteamaculans (strain 568).